Consider the following 854-residue polypeptide: Protein ROOT HAIR DEFECTIVE 3 homolog 1 (854 aa).

At 1–680 (MDEAAAAEAV…QAHKRGNGRL (680 aa)) the chain is on the cytoplasmic side. The GB1/RHD3-type G domain occupies 37-252 (GLSYAVVSIM…IAPGGLAGDR (216 aa)). Position 47–54 (47–54 (GPQSSGKS)) interacts with GTP. Positions 217-242 (ALPSFEEKEEQFREQVQQLRQRFSNS) form a coiled coil. The helical transmembrane segment at 681–701 (PPPWAMVAIAVLGFNEIMTLL) threads the bilayer. Topologically, residues 702–704 (RNP) are lumenal. Residues 705 to 725 (IYLFLLFVGYLLVKALAVQLD) traverse the membrane as a helical segment. At 726–854 (INREFQNGVV…NESNNAYSIV (129 aa)) the chain is on the cytoplasmic side. 2 stretches are compositionally biased toward low complexity: residues 758–781 (TEQQ…QQQP) and 814–828 (VSPS…VTSP). Residues 758-854 (TEQQQQQGHH…NESNNAYSIV (97 aa)) form a disordered region. Positions 842 to 854 (QPDNESNNAYSIV) are enriched in polar residues.

It belongs to the TRAFAC class dynamin-like GTPase superfamily. GB1/RHD3 GTPase family. RHD3 subfamily.

It localises to the endoplasmic reticulum membrane. Its function is as follows. Probable GTP-binding protein that may be involved in cell development. This is Protein ROOT HAIR DEFECTIVE 3 homolog 1 from Oryza sativa subsp. japonica (Rice).